The primary structure comprises 207 residues: Claudin-11 (207 aa).

Methionine 1 is a topological domain (cytoplasmic). Residues 2 to 22 traverse the membrane as a helical segment; that stretch reads VATCLQVVGFVTSFVGWIGII. Topologically, residues 23–82 are extracellular; it reads VTTSTNDWVVTCSYTIPTCRKMDELGSKGLWADCVMATGLYHCKPLVDILILPGYVQACR. The chain crosses the membrane as a helical span at residues 83-103; the sequence is ALMIAASVLGLPAILLLLTVL. At 104–122 the chain is on the cytoplasmic side; sequence PCIRMGHEPGVAKYRRAQL. Residues 123–143 traverse the membrane as a helical segment; it reads AGVLLILLALCAIVATIWFPV. At 144-157 the chain is on the extracellular side; sequence CAHREITIVSFGYS. A helical membrane pass occupies residues 158–178; sequence LYAGWIGAVMCLVGGCVIVCC. The Cytoplasmic portion of the chain corresponds to 179–207; the sequence is SGDAQSFGENRFYYSSGSSSPTHAKSAHV. 4 positions are modified to phosphoserine: serine 193, serine 194, serine 197, and serine 198.

The protein belongs to the claudin family. In terms of assembly, interacts with tetraspanin-3/TSPAN3. Interacts with OCLN.

The protein resides in the cell junction. Its subcellular location is the tight junction. It localises to the cell membrane. Its function is as follows. Plays a major role in tight junction-specific obliteration of the intercellular space, through calcium-independent cell-adhesion activity. The protein is Claudin-11 (Cldn11) of Mus musculus (Mouse).